Consider the following 117-residue polypeptide: Huntingtin-interacting protein M (117 aa).

Basic and acidic residues-rich tracts occupy residues 1-11 (MSEKKSQEKPC) and 83-97 (QDRE…EPSR). Disordered regions lie at residues 1 to 25 (MSEK…SRPE) and 74 to 117 (NINN…RRNG).

May interact with the N-terminus of HD.

The sequence is that of Huntingtin-interacting protein M from Mus musculus (Mouse).